A 300-amino-acid chain; its full sequence is Transmembrane protein 158 (300 aa).

The first 20 residues, 1–20, serve as a signal peptide directing secretion; the sequence is MLPLLAALLAAACPLPPVRG. N-linked (GlcNAc...) asparagine glycosylation is present at asparagine 75. 2 helical membrane passes run 231-251 and 273-293; these read LVIVVWSVAALIWPVPIIAGF and VPAGTTAAAAAAAAAAAAAAV.

The protein belongs to the TMEM158 family. In terms of processing, N-glycosylated.

Its subcellular location is the membrane. In terms of biological role, receptor for brain injury-derived neurotrophic peptide (BINP), a synthetic 13-mer peptide. The sequence is that of Transmembrane protein 158 (TMEM158) from Homo sapiens (Human).